We begin with the raw amino-acid sequence, 98 residues long: uncharacterized protein (98 aa).

The N-terminal stretch at 1-23 (MKYVALAFVLSLVILQISAQVGA) is a signal peptide.

Nacreous layer of shell (at protein level). Expressed primarily in the mantle with highest level in the mantle pallium and lower level in the mantle edge.

It is found in the secreted. This is an uncharacterized protein from Pinctada maxima (Silver-lipped pearl oyster).